A 479-amino-acid polypeptide reads, in one-letter code: Phosphoglycerate kinase, glycosomal (479 aa).

12 residues coordinate (2R)-3-phosphoglycerate: Val-23, Asp-24, Phe-25, Asn-26, Arg-39, Ser-61, His-62, Gly-64, Arg-65, Arg-132, His-168, and Arg-169. Residues Gly-214 and Ala-215 each coordinate ADP. CDP is bound at residue Gly-214. 2 residues coordinate AMP: Ala-215 and Lys-216. Ala-215 serves as a coordination point for ATP. Residue Ala-215 participates in Mg(2+) binding. (2R)-3-phosphoglycerate is bound at residue Lys-216. Asp-219 contributes to the CDP binding site. Asp-219 is a Mg(2+) binding site. Lys-220 and Gly-238 together coordinate ADP. Position 220 (Lys-220) interacts with AMP. Lys-220 contacts ATP. Gly-238 lines the CDP pocket. 2 residues coordinate AMP: Ala-239 and Ala-311. The ATP site is built by Ala-239 and Ala-311. Positions 311 and 335 each coordinate ADP. Residues Gly-336 and Phe-341 each coordinate CDP. 4 residues coordinate ADP: Phe-341, Glu-342, Asp-374, and Ser-375. Glu-342 contributes to the AMP binding site. The ATP site is built by Glu-342, Asp-374, and Ser-375. Asp-374 contributes to the Mg(2+) binding site.

The protein belongs to the phosphoglycerate kinase family. As to quaternary structure, monomer. Mg(2+) serves as cofactor.

It is found in the glycosome. The catalysed reaction is (2R)-3-phosphoglycerate + ATP = (2R)-3-phospho-glyceroyl phosphate + ADP. It participates in carbohydrate degradation; glycolysis; pyruvate from D-glyceraldehyde 3-phosphate: step 2/5. In Leishmania major, this protein is Phosphoglycerate kinase, glycosomal (PGKC).